Consider the following 423-residue polypeptide: Tyrosine--tRNA ligase (423 aa).

L-tyrosine is bound at residue tyrosine 35. The 'HIGH' region motif lies at 40 to 49 (PTAPSLHAGH). The L-tyrosine site is built by tyrosine 170 and glutamine 174. The 'KMSKS' region motif lies at 230-234 (KFGKS). Lysine 233 is an ATP binding site. The S4 RNA-binding domain occupies 355–412 (DLITDLLVATGLSASKGAARRTIAEGGVSVNNVKIDSDEWTPQASDFLHGRWLVLRRG).

Belongs to the class-I aminoacyl-tRNA synthetase family. TyrS type 1 subfamily. In terms of assembly, homodimer.

It is found in the cytoplasm. The catalysed reaction is tRNA(Tyr) + L-tyrosine + ATP = L-tyrosyl-tRNA(Tyr) + AMP + diphosphate + H(+). Functionally, catalyzes the attachment of tyrosine to tRNA(Tyr) in a two-step reaction: tyrosine is first activated by ATP to form Tyr-AMP and then transferred to the acceptor end of tRNA(Tyr). This is Tyrosine--tRNA ligase from Mycobacterium sp. (strain JLS).